We begin with the raw amino-acid sequence, 252 residues long: PF03932 family protein CutC (252 aa).

This sequence belongs to the CutC family.

The protein localises to the cytoplasm. The protein is PF03932 family protein CutC of Serratia proteamaculans (strain 568).